Here is a 280-residue protein sequence, read N- to C-terminus: 4-deoxy-L-threo-5-hexosulose-uronate ketol-isomerase 1 (280 aa).

4 residues coordinate Zn(2+): H198, H200, E205, and H247.

The protein belongs to the KduI family. The cofactor is Zn(2+).

It carries out the reaction 5-dehydro-4-deoxy-D-glucuronate = 3-deoxy-D-glycero-2,5-hexodiulosonate. The protein operates within glycan metabolism; pectin degradation; 2-dehydro-3-deoxy-D-gluconate from pectin: step 4/5. In terms of biological role, catalyzes the isomerization of 5-dehydro-4-deoxy-D-glucuronate to 3-deoxy-D-glycero-2,5-hexodiulosonate. The chain is 4-deoxy-L-threo-5-hexosulose-uronate ketol-isomerase 1 (kduI1) from Rhizobium meliloti (strain 1021) (Ensifer meliloti).